The primary structure comprises 445 residues: Retrovirus-related Pol polyprotein from type-1 retrotransposable element R2 (445 aa).

The 114-residue stretch at 1–114 folds into the Reverse transcriptase domain; it reads QPSVFNLVKW…LSRDDSLAKA (114 aa). The tract at residues 115-445 is nucleic acid-binding endonuclease; sequence MLASAGPAAE…GATPRQLIEY (331 aa). The segment covering 380–389 has biased composition (basic residues); that stretch reads GPRPAHHHQP. A disordered region spans residues 380 to 445; that stretch reads GPRPAHHHQP…GATPRQLIEY (66 aa). Residues 396–405 show a composition bias toward polar residues; that stretch reads ATANTGTLQS.

It carries out the reaction DNA(n) + a 2'-deoxyribonucleoside 5'-triphosphate = DNA(n+1) + diphosphate. The chain is Retrovirus-related Pol polyprotein from type-1 retrotransposable element R2 from Popillia japonica (Japanese beetle).